The chain runs to 266 residues: Interleukin-1 beta (266 aa).

The propeptide occupies Met-1–Asp-113.

Belongs to the IL-1 family. Monomer. In its precursor form, weakly interacts with full-length MEFV; the mature cytokine does not interact at all. Interacts with integrins ITGAV:ITGBV and ITGA5:ITGB1; integrin-binding is required for IL1B signaling. Interacts with cargo receptor TMED10; the interaction is direct and is required for the secretion of IL1B mature form. Interacts with HSP90AB1; the interaction facilitates cargo translocation into the ERGIC. Interacts with HSP90B1; the interaction facilitates cargo translocation into the ERGIC.

It is found in the cytoplasm. The protein localises to the cytosol. It localises to the secreted. Its subcellular location is the lysosome. The protein resides in the extracellular exosome. Functionally, potent pro-inflammatory cytokine. Initially discovered as the major endogenous pyrogen, induces prostaglandin synthesis, neutrophil influx and activation, T-cell activation and cytokine production, B-cell activation and antibody production, and fibroblast proliferation and collagen production. Promotes Th17 differentiation of T-cells. Synergizes with IL12/interleukin-12 to induce IFNG synthesis from T-helper 1 (Th1) cells. Plays a role in angiogenesis by inducing VEGF production synergistically with TNF and IL6. Involved in transduction of inflammation downstream of pyroptosis: its mature form is specifically released in the extracellular milieu by passing through the gasdermin-D (GSDMD) pore. The polypeptide is Interleukin-1 beta (IL1B) (Bubalus carabanensis (Swamp type water buffalo)).